Here is an 84-residue protein sequence, read N- to C-terminus: Exodeoxyribonuclease 7 small subunit (84 aa).

It belongs to the XseB family. In terms of assembly, heterooligomer composed of large and small subunits.

It is found in the cytoplasm. The catalysed reaction is Exonucleolytic cleavage in either 5'- to 3'- or 3'- to 5'-direction to yield nucleoside 5'-phosphates.. Functionally, bidirectionally degrades single-stranded DNA into large acid-insoluble oligonucleotides, which are then degraded further into small acid-soluble oligonucleotides. This Janthinobacterium sp. (strain Marseille) (Minibacterium massiliensis) protein is Exodeoxyribonuclease 7 small subunit.